Here is a 154-residue protein sequence, read N- to C-terminus: Ascorbate-specific PTS system EIIA component (154 aa).

One can recognise a PTS EIIA type-2 domain in the interval 6–150; it reads SLAENKSIRL…QEVLDLIDRT (145 aa). H68 acts as the Tele-phosphohistidine intermediate in catalysis. Position 68 is a phosphohistidine (H68).

It localises to the cytoplasm. Its function is as follows. The phosphoenolpyruvate-dependent sugar phosphotransferase system (sugar PTS), a major carbohydrate active transport system, catalyzes the phosphorylation of incoming sugar substrates concomitantly with their translocation across the cell membrane. The enzyme II UlaABC PTS system is involved in ascorbate transport. The chain is Ascorbate-specific PTS system EIIA component (ulaC) from Shigella flexneri.